An 813-amino-acid polypeptide reads, in one-letter code: Leucine--tRNA ligase (813 aa).

The short motif at 40–51 (SYPSGSKLHAGH) is the 'HIGH' region element. The 'KMSKS' region signature appears at 572–576 (KMSKS). Lys-575 is an ATP binding site.

The protein belongs to the class-I aminoacyl-tRNA synthetase family.

The protein resides in the cytoplasm. The enzyme catalyses tRNA(Leu) + L-leucine + ATP = L-leucyl-tRNA(Leu) + AMP + diphosphate. The protein is Leucine--tRNA ligase of Clostridium botulinum (strain Langeland / NCTC 10281 / Type F).